The sequence spans 182 residues: Large ribosomal subunit protein uL5 (182 aa).

Belongs to the universal ribosomal protein uL5 family. Part of the 50S ribosomal subunit; part of the 5S rRNA/L5/L18/L25 subcomplex. Contacts the 5S rRNA and the P site tRNA. Forms a bridge to the 30S subunit in the 70S ribosome.

This is one of the proteins that bind and probably mediate the attachment of the 5S RNA into the large ribosomal subunit, where it forms part of the central protuberance. In the 70S ribosome it contacts protein S13 of the 30S subunit (bridge B1b), connecting the 2 subunits; this bridge is implicated in subunit movement. Contacts the P site tRNA; the 5S rRNA and some of its associated proteins might help stabilize positioning of ribosome-bound tRNAs. The polypeptide is Large ribosomal subunit protein uL5 (Borrelia turicatae (strain 91E135)).